Reading from the N-terminus, the 242-residue chain is Urease accessory protein UreF (242 aa).

It belongs to the UreF family. In terms of assembly, ureD, UreF and UreG form a complex that acts as a GTP-hydrolysis-dependent molecular chaperone, activating the urease apoprotein by helping to assemble the nickel containing metallocenter of UreC. The UreE protein probably delivers the nickel.

The protein resides in the cytoplasm. Functionally, required for maturation of urease via the functional incorporation of the urease nickel metallocenter. The chain is Urease accessory protein UreF from Bradyrhizobium diazoefficiens (strain JCM 10833 / BCRC 13528 / IAM 13628 / NBRC 14792 / USDA 110).